Here is a 349-residue protein sequence, read N- to C-terminus: AdoMet-dependent heme synthase (349 aa).

The Radical SAM core domain maps to 5-214 (TNAPRLIAWE…LHWFYEMQKE (210 aa)). C19, C23, and C26 together coordinate [4Fe-4S] cluster.

It belongs to the radical SAM superfamily. It depends on [4Fe-4S] cluster as a cofactor.

The enzyme catalyses Fe-coproporphyrin III + 2 S-adenosyl-L-methionine = heme b + 2 5'-deoxyadenosine + 2 L-methionine + 2 CO2. It functions in the pathway porphyrin-containing compound metabolism; protoheme biosynthesis. Its function is as follows. Involved in siroheme-dependent heme b biosynthesis. Catalyzes the conversion of Fe-coproporphyrin III into heme by the oxidative decarboxylation of two propionate side chains. The sequence is that of AdoMet-dependent heme synthase from Methanosarcina barkeri (strain Fusaro / DSM 804).